A 210-amino-acid chain; its full sequence is Redox-sensing transcriptional repressor Rex (210 aa).

A DNA-binding region (H-T-H motif) is located at residues 16 to 55 (IYMRTLQELLEDDVDVISSERLAKQCGVNPAQIRKDLAYF). 90 to 95 (GLGNLG) contacts NAD(+).

It belongs to the transcriptional regulatory Rex family. As to quaternary structure, homodimer.

It is found in the cytoplasm. Functionally, modulates transcription in response to changes in cellular NADH/NAD(+) redox state. The polypeptide is Redox-sensing transcriptional repressor Rex (Syntrophobacter fumaroxidans (strain DSM 10017 / MPOB)).